A 372-amino-acid polypeptide reads, in one-letter code: GDSL esterase/lipase At5g45910 (372 aa).

The signal sequence occupies residues 1–19 (MRINMLFIVAFSFLVSVRS). Ser37 functions as the Nucleophile in the catalytic mechanism. Asn66, Asn101, and Asn137 each carry an N-linked (GlcNAc...) asparagine glycan. Catalysis depends on residues Asp345 and His348.

Belongs to the 'GDSL' lipolytic enzyme family.

It localises to the secreted. The protein is GDSL esterase/lipase At5g45910 of Arabidopsis thaliana (Mouse-ear cress).